A 204-amino-acid polypeptide reads, in one-letter code: Proteasome subunit beta 2 (204 aa).

A propeptide spans 1 to 6 (MEVLPG) (removed in mature form; by autocatalysis). Thr7 acts as the Nucleophile in catalysis.

This sequence belongs to the peptidase T1B family. As to quaternary structure, the 20S proteasome core is composed of 14 alpha and 14 beta subunits that assemble into four stacked heptameric rings, resulting in a barrel-shaped structure. The two inner rings, each composed of seven catalytic beta subunits, are sandwiched by two outer rings, each composed of seven alpha subunits. The catalytic chamber with the active sites is on the inside of the barrel. Has a gated structure, the ends of the cylinder being occluded by the N-termini of the alpha-subunits. Is capped at one or both ends by the proteasome regulatory ATPase, PAN.

The protein resides in the cytoplasm. The enzyme catalyses Cleavage of peptide bonds with very broad specificity.. With respect to regulation, the formation of the proteasomal ATPase PAN-20S proteasome complex, via the docking of the C-termini of PAN into the intersubunit pockets in the alpha-rings, triggers opening of the gate for substrate entry. Interconversion between the open-gate and close-gate conformations leads to a dynamic regulation of the 20S proteasome proteolysis activity. Component of the proteasome core, a large protease complex with broad specificity involved in protein degradation. The sequence is that of Proteasome subunit beta 2 from Thermofilum pendens (strain DSM 2475 / Hrk 5).